We begin with the raw amino-acid sequence, 499 residues long: Aspartyl/glutamyl-tRNA(Asn/Gln) amidotransferase subunit B (499 aa).

Belongs to the GatB/GatE family. GatB subfamily. Heterotrimer of A, B and C subunits.

It catalyses the reaction L-glutamyl-tRNA(Gln) + L-glutamine + ATP + H2O = L-glutaminyl-tRNA(Gln) + L-glutamate + ADP + phosphate + H(+). The enzyme catalyses L-aspartyl-tRNA(Asn) + L-glutamine + ATP + H2O = L-asparaginyl-tRNA(Asn) + L-glutamate + ADP + phosphate + 2 H(+). Its function is as follows. Allows the formation of correctly charged Asn-tRNA(Asn) or Gln-tRNA(Gln) through the transamidation of misacylated Asp-tRNA(Asn) or Glu-tRNA(Gln) in organisms which lack either or both of asparaginyl-tRNA or glutaminyl-tRNA synthetases. The reaction takes place in the presence of glutamine and ATP through an activated phospho-Asp-tRNA(Asn) or phospho-Glu-tRNA(Gln). In Salinispora arenicola (strain CNS-205), this protein is Aspartyl/glutamyl-tRNA(Asn/Gln) amidotransferase subunit B.